The primary structure comprises 275 residues: 3-methyl-2-oxobutanoate hydroxymethyltransferase (275 aa).

Mg(2+) is bound by residues D49 and D88. 3-methyl-2-oxobutanoate-binding positions include 49-50, D88, and K118; that span reads DS. A Mg(2+)-binding site is contributed by E120. The active-site Proton acceptor is E187.

Belongs to the PanB family. In terms of assembly, homodecamer; pentamer of dimers. It depends on Mg(2+) as a cofactor.

It localises to the cytoplasm. The enzyme catalyses 3-methyl-2-oxobutanoate + (6R)-5,10-methylene-5,6,7,8-tetrahydrofolate + H2O = 2-dehydropantoate + (6S)-5,6,7,8-tetrahydrofolate. The protein operates within cofactor biosynthesis; (R)-pantothenate biosynthesis; (R)-pantoate from 3-methyl-2-oxobutanoate: step 1/2. Functionally, catalyzes the reversible reaction in which hydroxymethyl group from 5,10-methylenetetrahydrofolate is transferred onto alpha-ketoisovalerate to form ketopantoate. The sequence is that of 3-methyl-2-oxobutanoate hydroxymethyltransferase from Nitrobacter hamburgensis (strain DSM 10229 / NCIMB 13809 / X14).